The chain runs to 149 residues: Calmodulin (149 aa).

At Ala-2 the chain carries N-acetylalanine. EF-hand domains follow at residues 8-43, 44-79, 81-116, and 117-149; these read EQIAEFKEAFSLFDKDGDGTITTKELGTVMRSLGQN, PTEAELQDMINEVDADGNGTIDFPEFLTMMARKMKD, DSEEEIREAFRVFDKDGNGFISAAELRHVMTNLGEK, and LTDEEVDEMIREADIDGDGQVNYEEFVTMMMSK. Residues Asp-21, Asp-23, Asp-25, Thr-27, Glu-32, Asp-57, Asp-59, Asn-61, Thr-63, Glu-68, Asp-94, Asp-96, Asn-98, and Glu-105 each coordinate Ca(2+). The residue at position 116 (Lys-116) is an N6,N6,N6-trimethyllysine. Ca(2+) is bound by residues Asp-130, Asp-132, Asp-134, Gln-136, and Glu-141.

It belongs to the calmodulin family.

In terms of biological role, calmodulin mediates the control of a large number of enzymes, ion channels and other proteins by Ca(2+). Among the enzymes to be stimulated by the calmodulin-Ca(2+) complex are a number of protein kinases and phosphatases. The chain is Calmodulin from Lumbricus rubellus (Humus earthworm).